The chain runs to 388 residues: Succinate--CoA ligase [ADP-forming] subunit beta (388 aa).

The ATP-grasp domain maps to 9 to 244 (KQLFARYGLP…QSQEDPREAQ (236 aa)). ATP-binding positions include Lys-46, 53 to 55 (GRG), Glu-99, Thr-102, and Glu-107. Positions 199 and 213 each coordinate Mg(2+). Substrate contacts are provided by residues Asn-264 and 321 to 323 (GIV).

It belongs to the succinate/malate CoA ligase beta subunit family. In terms of assembly, heterotetramer of two alpha and two beta subunits. The cofactor is Mg(2+).

The catalysed reaction is succinate + ATP + CoA = succinyl-CoA + ADP + phosphate. It carries out the reaction GTP + succinate + CoA = succinyl-CoA + GDP + phosphate. It functions in the pathway carbohydrate metabolism; tricarboxylic acid cycle; succinate from succinyl-CoA (ligase route): step 1/1. Functionally, succinyl-CoA synthetase functions in the citric acid cycle (TCA), coupling the hydrolysis of succinyl-CoA to the synthesis of either ATP or GTP and thus represents the only step of substrate-level phosphorylation in the TCA. The beta subunit provides nucleotide specificity of the enzyme and binds the substrate succinate, while the binding sites for coenzyme A and phosphate are found in the alpha subunit. In Salmonella arizonae (strain ATCC BAA-731 / CDC346-86 / RSK2980), this protein is Succinate--CoA ligase [ADP-forming] subunit beta.